Reading from the N-terminus, the 512-residue chain is Protein SHC1 (512 aa).

Acidic residues predominate over residues 101–113 (EQDEFENDVEDDA). Disordered stretches follow at residues 101–122 (EQDE…EKSQ) and 144–165 (DGNS…SVAL). Sel1-like repeat units lie at residues 318–353 (PDAQ…KRLH), 354–389 (IESV…TKNH), 390–429 (PAAM…SMAS), and 433–470 (CGAP…ALGH).

The protein belongs to the SKT5 family.

It localises to the cytoplasm. The protein localises to the cytoplasmic granule membrane. Its function is as follows. Required for the activation of chitin synthase III (CHS3) activity during the sporulation process. The polypeptide is Protein SHC1 (SHC1) (Saccharomyces cerevisiae (strain YJM789) (Baker's yeast)).